Consider the following 434-residue polypeptide: Histidine--tRNA ligase (434 aa).

This sequence belongs to the class-II aminoacyl-tRNA synthetase family. In terms of assembly, homodimer.

The protein localises to the cytoplasm. The catalysed reaction is tRNA(His) + L-histidine + ATP = L-histidyl-tRNA(His) + AMP + diphosphate + H(+). This is Histidine--tRNA ligase from Chlorobium phaeobacteroides (strain BS1).